The chain runs to 219 residues: Regulatory protein YeiL (219 aa).

The interval 19–97 (RLFHFLARDY…IEECWCLALP (79 aa)) is sensory domain. The [4Fe-4S] cluster site is built by Cys68, Cys91, Cys93, and Cys116. The dimer interface stretch occupies residues 111-131 (FLRKLCVTLSHKNYRNIVSLT). The HTH crp-type domain maps to 136 to 199 (FPLVNRLAAF…KKGYLIKNRK (64 aa)). A DNA-binding region (H-T-H motif) is located at residues 158–181 (KHTQAAEYLGVSYRHLLYVLAQFI).

Homodimer. [4Fe-4S] cluster serves as cofactor.

It is found in the cytoplasm. In terms of biological role, transcription regulator involved in mid-term, stationary-phase viability under nitrogen starvation. Might control expression of the salvage pathways or in some other way repress the recycling of nucleobases to nucleic acids and enhance their use as general nitrogen sources during nitrogen-limited growth. In Escherichia coli O157:H7, this protein is Regulatory protein YeiL (yeiL).